The sequence spans 120 residues: NAD(P)H-quinone oxidoreductase subunit 3 (120 aa).

The next 3 helical transmembrane spans lie at 10-30, 64-84, and 89-109; these read FLGFLLIAAAVPILALVTNLI, MFALVFVIFDVETVFLYPWAV, and LGLLAFIEALIFIAILVIALA.

The protein belongs to the complex I subunit 3 family. In terms of assembly, NDH-1 can be composed of about 15 different subunits; different subcomplexes with different compositions have been identified which probably have different functions.

The protein resides in the cellular thylakoid membrane. It catalyses the reaction a plastoquinone + NADH + (n+1) H(+)(in) = a plastoquinol + NAD(+) + n H(+)(out). The catalysed reaction is a plastoquinone + NADPH + (n+1) H(+)(in) = a plastoquinol + NADP(+) + n H(+)(out). Functionally, NDH-1 shuttles electrons from an unknown electron donor, via FMN and iron-sulfur (Fe-S) centers, to quinones in the respiratory and/or the photosynthetic chain. The immediate electron acceptor for the enzyme in this species is believed to be plastoquinone. Couples the redox reaction to proton translocation, and thus conserves the redox energy in a proton gradient. Cyanobacterial NDH-1 also plays a role in inorganic carbon-concentration. This is NAD(P)H-quinone oxidoreductase subunit 3 from Prochlorococcus marinus (strain MIT 9312).